The primary structure comprises 334 residues: MTRILDNDLMGDEELIERTLRPQYLKEYIGQDKVKNQLSIFIEAAKLRDESLDHVLLFGPPGLGKTTMAFVIANELGVNLKQTSGPAIEKAGDLVAILNDLEPGDVLFIDEIHRMPMAVEEVLYSAMEDFYIDIMIGAGDTSRSVHLELPPFTLIGATTRAGMLSNPLRARFGITGHMEYYQVDDLTEIVERTSDIFEMAIVHEAALELAKRSRGTPRIANRLLKRVRDYAQIMGDGVITKEMTDKALEMLDVDHEGLDYVDQKILRTMIEMYNGGPVGLGTLSVNIAEERDTVEDMYEPYLIQKGFIMRTRTGRVATEKAYRHLKYPLDTKTE.

Residues 1–181 (MTRILDNDLM…FGITGHMEYY (181 aa)) are large ATPase domain (RuvB-L). Residues Leu20, Arg21, Gly62, Lys65, Thr66, Thr67, 128 to 130 (EDF), Arg171, Tyr181, and Arg218 each bind ATP. Thr66 contacts Mg(2+). A small ATPAse domain (RuvB-S) region spans residues 182–252 (QVDDLTEIVE…MTDKALEMLD (71 aa)). The segment at 255–334 (HEGLDYVDQK…LKYPLDTKTE (80 aa)) is head domain (RuvB-H). DNA is bound by residues Arg291, Arg310, Arg312, and Arg315.

It belongs to the RuvB family. In terms of assembly, homohexamer. Forms an RuvA(8)-RuvB(12)-Holliday junction (HJ) complex. HJ DNA is sandwiched between 2 RuvA tetramers; dsDNA enters through RuvA and exits via RuvB. An RuvB hexamer assembles on each DNA strand where it exits the tetramer. Each RuvB hexamer is contacted by two RuvA subunits (via domain III) on 2 adjacent RuvB subunits; this complex drives branch migration. In the full resolvosome a probable DNA-RuvA(4)-RuvB(12)-RuvC(2) complex forms which resolves the HJ.

Its subcellular location is the cytoplasm. It carries out the reaction ATP + H2O = ADP + phosphate + H(+). In terms of biological role, the RuvA-RuvB-RuvC complex processes Holliday junction (HJ) DNA during genetic recombination and DNA repair, while the RuvA-RuvB complex plays an important role in the rescue of blocked DNA replication forks via replication fork reversal (RFR). RuvA specifically binds to HJ cruciform DNA, conferring on it an open structure. The RuvB hexamer acts as an ATP-dependent pump, pulling dsDNA into and through the RuvAB complex. RuvB forms 2 homohexamers on either side of HJ DNA bound by 1 or 2 RuvA tetramers; 4 subunits per hexamer contact DNA at a time. Coordinated motions by a converter formed by DNA-disengaged RuvB subunits stimulates ATP hydrolysis and nucleotide exchange. Immobilization of the converter enables RuvB to convert the ATP-contained energy into a lever motion, pulling 2 nucleotides of DNA out of the RuvA tetramer per ATP hydrolyzed, thus driving DNA branch migration. The RuvB motors rotate together with the DNA substrate, which together with the progressing nucleotide cycle form the mechanistic basis for DNA recombination by continuous HJ branch migration. Branch migration allows RuvC to scan DNA until it finds its consensus sequence, where it cleaves and resolves cruciform DNA. In Streptococcus uberis (strain ATCC BAA-854 / 0140J), this protein is Holliday junction branch migration complex subunit RuvB.